The chain runs to 1155 residues: RhoGEF domain-containing protein gxcJ (1155 aa).

5 disordered regions span residues 114-216 (ENNS…NFLK), 259-333 (LNKK…IPSN), 429-460 (LVSQ…DSLE), 484-508 (LNNE…TTTT), and 604-639 (SNSN…NNYQ). 3 stretches are compositionally biased toward low complexity: residues 115-153 (NNSI…TNNN), 161-211 (TITN…NNNN), and 260-303 (NKKS…NNNN). Residues 192–257 (NNNNNNNNNN…KDIEKLNSAL (66 aa)) are a coiled coil. Polar residues predominate over residues 304 to 319 (YKPTITSSQTQPSLME). Positions 320 to 330 (NSKDIDKKEKI) are enriched in basic and acidic residues. The segment covering 441–457 (FLASASSSSTTTITTTD) has biased composition (low complexity). The segment covering 604–637 (SNSNSSNNNNSNSNNITNSNSSSFSKKNSNNNNN) has biased composition (low complexity). Residues 700-874 (HRTNLIKEIL…EKIVGTINSQ (175 aa)) form the DH domain. The disordered stretch occupies residues 1084-1155 (SHRLSIPSTS…LVKSLVNIKT (72 aa)). Low complexity-rich tracts occupy residues 1093 to 1121 (SSPN…GSPN) and 1128 to 1137 (QQQQLQQQQQ).

Functionally, GTPase-activating protein. This is RhoGEF domain-containing protein gxcJ (gxcJ) from Dictyostelium discoideum (Social amoeba).